We begin with the raw amino-acid sequence, 333 residues long: NADH-quinone oxidoreductase subunit H (333 aa).

A run of 8 helical transmembrane segments spans residues Phe15–Tyr35, Phe88–Phe108, Ile117–Thr137, Ile159–Leu179, Val191–Glu211, Trp239–Val259, Gly272–Phe294, and Ile313–Phe333.

The protein belongs to the complex I subunit 1 family. NDH-1 is composed of 14 different subunits. Subunits NuoA, H, J, K, L, M, N constitute the membrane sector of the complex.

It is found in the cell membrane. The catalysed reaction is a quinone + NADH + 5 H(+)(in) = a quinol + NAD(+) + 4 H(+)(out). NDH-1 shuttles electrons from NADH, via FMN and iron-sulfur (Fe-S) centers, to quinones in the respiratory chain. The immediate electron acceptor for the enzyme in this species is believed to be ubiquinone. Couples the redox reaction to proton translocation (for every two electrons transferred, four hydrogen ions are translocated across the cytoplasmic membrane), and thus conserves the redox energy in a proton gradient. This subunit may bind ubiquinone. This chain is NADH-quinone oxidoreductase subunit H, found in Bacillus mycoides (strain KBAB4) (Bacillus weihenstephanensis).